The sequence spans 870 residues: Lon protease (870 aa).

Residues 1 to 270 enclose the Lon N-terminal domain; that stretch reads MPTNSYRFLV…KLYEHIHTFA (270 aa). 454–461 is an ATP binding site; the sequence is GPPGTGKT. Residues 691–870 enclose the Lon proteolytic domain; sequence SPQIGTVTGL…YQQIYDFIFK (180 aa). Active-site residues include Ser-777 and Lys-820.

The protein belongs to the peptidase S16 family. In terms of assembly, homohexamer. Organized in a ring with a central cavity.

Its subcellular location is the cytoplasm. It catalyses the reaction Hydrolysis of proteins in presence of ATP.. ATP-dependent serine protease that mediates the selective degradation of mutant and abnormal proteins as well as certain short-lived regulatory proteins. Required for cellular homeostasis and for survival from DNA damage and developmental changes induced by stress. Degrades polypeptides processively to yield small peptide fragments that are 5 to 10 amino acids long. Binds to DNA in a double-stranded, site-specific manner. The sequence is that of Lon protease from Mesomycoplasma hyopneumoniae (strain 232) (Mycoplasma hyopneumoniae).